A 461-amino-acid polypeptide reads, in one-letter code: Peptidyl-prolyl cis-trans isomerase-like 4 (461 aa).

In terms of domain architecture, PPIase cyclophilin-type spans 1 to 171 (MSVLLETSLG…KDIRIRHTVI (171 aa)). Positions 205-234 (EELDDNMDEESMEKLRREREARAQALTLEM) form a coiled coil. Positions 248–326 (NVLFVCKLNP…HRIHVDFSQS (79 aa)) constitute an RRM domain. The tract at residues 341–461 (KRSGQRGGFG…DERYRERRRR (121 aa)) is disordered. Basic and acidic residues-rich tracts occupy residues 365–384 (DNAREKENDYTLVFDKGDKA) and 398–461 (SNRD…RRRR).

Belongs to the cyclophilin-type PPIase family. PPIL4 subfamily.

The protein localises to the nucleus. It carries out the reaction [protein]-peptidylproline (omega=180) = [protein]-peptidylproline (omega=0). Functionally, PPIases accelerate the folding of proteins. It catalyzes the cis-trans isomerization of proline imidic peptide bonds in oligopeptides. This is Peptidyl-prolyl cis-trans isomerase-like 4 (cyp6) from Aspergillus oryzae (strain ATCC 42149 / RIB 40) (Yellow koji mold).